We begin with the raw amino-acid sequence, 218 residues long: Adenylate kinase (218 aa).

ATP is bound at residue 10–15 (GAGKGT). The tract at residues 30–59 (STGDMLRAAVKQGTPLGQEAKKVMDAGGLV) is NMP. Residues threonine 31, arginine 36, 57-59 (GLV), 85-88 (GFPR), and glutamine 92 contribute to the AMP site. The LID stretch occupies residues 122 to 159 (GRRVHPASGRSYHVRFNPPKQEGLDDVTGEPLVQRDDD). ATP contacts are provided by residues arginine 123 and 132-133 (SY). Residues arginine 156 and arginine 167 each coordinate AMP. An ATP-binding site is contributed by glycine 203.

Belongs to the adenylate kinase family. Monomer.

It localises to the cytoplasm. The catalysed reaction is AMP + ATP = 2 ADP. The protein operates within purine metabolism; AMP biosynthesis via salvage pathway; AMP from ADP: step 1/1. Its function is as follows. Catalyzes the reversible transfer of the terminal phosphate group between ATP and AMP. Plays an important role in cellular energy homeostasis and in adenine nucleotide metabolism. This Bordetella petrii (strain ATCC BAA-461 / DSM 12804 / CCUG 43448) protein is Adenylate kinase.